Consider the following 2343-residue polypeptide: Coagulation factor VIII (2343 aa).

An N-terminal signal peptide occupies residues 1–19; the sequence is MQVELYTCCFLCLLPFSLS. Plastocyanin-like domains follow at residues 20 to 199 and 207 to 343; these read ATRK…LLVC and ERTQ…VDSC. One can recognise an F5/8 type A 1 domain in the interval 20–343; it reads ATRKYYLGAV…MEAYVKVDSC (324 aa). N-linked (GlcNAc...) asparagine glycosylation is found at Asn233 and Asn253. Tyr359 and Tyr408 each carry sulfotyrosine. Plastocyanin-like domains lie at 393–567 and 577–724; these read KTWV…LLIC and NQMM…VSSC. One can recognise an F5/8 type A 2 domain in the interval 393–724; sequence KTWVHYIAAE…MTALLKVSSC (332 aa). The N-linked (GlcNAc...) asparagine glycan is linked to Asn595. Sulfotyrosine occurs at positions 731, 732, and 736. Polar residues predominate over residues 752-761; the sequence is PRSFSQNSRH. 2 disordered regions span residues 752–774 and 828–865; these read PRSF…ATTT and ADDH…PEPE. The segment at 754–1659 is b; that stretch reads SFSQNSRHPS…NPPVSKHHQR (906 aa). Basic and acidic residues-rich tracts occupy residues 828–841 and 850–861; these read ADDH…RNKG and PELRHSEDREFT. N-linked (GlcNAc...) asparagine glycosylation is found at Asn877, Asn921, Asn937, Asn938, Asn956, Asn1007, Asn1019, Asn1037, Asn1062, Asn1069, and Asn1080. Positions 1124 to 1147 are disordered; it reads GKNSLSSEQRPSPKQLTSLGSEKS. Over residues 1125-1147 the composition is skewed to polar residues; it reads KNSLSSEQRPSPKQLTSLGSEKS. Residues Asn1179, Asn1193, Asn1275, Asn1290, Asn1308, Asn1341, Asn1391, Asn1419, Asn1429, Asn1453, Asn1547, and Asn1618 are each glycosylated (N-linked (GlcNAc...) asparagine). Positions 1302 to 1314 are enriched in polar residues; sequence TTRMSSNASQHVI. The segment at 1302 to 1326 is disordered; that stretch reads TTRMSSNASQHVITQRGKRSLKQPR. The tract at residues 1592 to 1632 is disordered; that stretch reads KSQKKSQTNTAFKRKDTILPLGPCENNDSTAAINEGQDKPQ. Tyr1675 and Tyr1691 each carry sulfotyrosine. 2 consecutive Plastocyanin-like domains span residues 1705-1869 and 1879-2032; these read KTRH…LLIC and GRQV…SKKC. Positions 1705-2032 constitute an F5/8 type A 3 domain; sequence KTRHYFIAAV…TLFLVYSKKC (328 aa). A glycan (N-linked (GlcNAc...) asparagine) is linked at Asn1821. F5/8 type C domains lie at 2032–2180 and 2185–2337; these read CQTP…LLGC and CSMP…VLGC. Disulfide bonds link Cys2032–Cys2180 and Cys2185–Cys2337. N-linked (GlcNAc...) asparagine glycosylation is found at Asn2129 and Asn2281.

It belongs to the multicopper oxidase family. As to quaternary structure, interacts with vWF. vWF binding is essential for the stabilization of F8 in circulation. In terms of processing, proteolytically cleaved by cathepsin CTSG to produce a partially activated form.

It is found in the secreted. The protein resides in the extracellular space. Factor VIII, along with calcium and phospholipid, acts as a cofactor for factor IXa when it converts factor X to the activated form, factor Xa. The chain is Coagulation factor VIII (F8) from Canis lupus familiaris (Dog).